The following is a 327-amino-acid chain: 2-methoxy-6-polyprenyl-1,4-benzoquinol methylase, mitochondrial (327 aa).

Residues 1-49 (MAAPRCCVLWRVCGRGWWRATGHCRLPGCHRSWPWATLGTRSLSQEKRA) constitute a mitochondrion transit peptide. Residues threonine 117, aspartate 171, and 199 to 200 (DA) each bind S-adenosyl-L-methionine.

The protein belongs to the class I-like SAM-binding methyltransferase superfamily. MenG/UbiE family. Component of a multi-subunit COQ enzyme complex, composed of at least COQ3, COQ4, COQ5, COQ6, COQ7 and COQ9. Interacts with PYURF; the interaction is direct, stabilizes COQ5 protein and associates PYURF with COQ enzyme complex.

The protein localises to the mitochondrion inner membrane. It carries out the reaction 2-methoxy-6-(all-trans-decaprenyl)benzene-1,4-diol + S-adenosyl-L-methionine = 5-methoxy-2-methyl-3-(all-trans-decaprenyl)benzene-1,4-diol + S-adenosyl-L-homocysteine + H(+). Its pathway is cofactor biosynthesis; ubiquinone biosynthesis. Methyltransferase required for the conversion of 2-decaprenyl-6-methoxy-1,4-benzoquinol (DDMQH2) to 2-decaprenyl-3-methyl-6-methoxy-1,4-benzoquinol (DMQH2). This chain is 2-methoxy-6-polyprenyl-1,4-benzoquinol methylase, mitochondrial, found in Mus musculus (Mouse).